The chain runs to 240 residues: DNA repair protein RecO (240 aa).

Belongs to the RecO family.

In terms of biological role, involved in DNA repair and RecF pathway recombination. The sequence is that of DNA repair protein RecO from Xanthomonas oryzae pv. oryzae (strain MAFF 311018).